Here is a 131-residue protein sequence, read N- to C-terminus: uncharacterized protein (131 aa).

The signal sequence occupies residues 1-16; it reads MDVLFVAIFAVPLILG.

The protein resides in the secreted. This is an uncharacterized protein from Homo sapiens (Human).